The following is a 192-amino-acid chain: Xanthine phosphoribosyltransferase (192 aa).

2 residues coordinate xanthine: leucine 20 and asparagine 27. 128 to 132 (ANGDA) is a binding site for 5-phospho-alpha-D-ribose 1-diphosphate. Lysine 156 provides a ligand contact to xanthine.

This sequence belongs to the purine/pyrimidine phosphoribosyltransferase family. Xpt subfamily. Homodimer.

It is found in the cytoplasm. The catalysed reaction is XMP + diphosphate = xanthine + 5-phospho-alpha-D-ribose 1-diphosphate. It participates in purine metabolism; XMP biosynthesis via salvage pathway; XMP from xanthine: step 1/1. Functionally, converts the preformed base xanthine, a product of nucleic acid breakdown, to xanthosine 5'-monophosphate (XMP), so it can be reused for RNA or DNA synthesis. The chain is Xanthine phosphoribosyltransferase from Staphylococcus aureus (strain JH1).